A 145-amino-acid polypeptide reads, in one-letter code: WGATVITNLMSAIPWIGQDIVEFIWGGFSVNNATLNRFFALHFLLPFVLAALALMHLIAMHDTVGSGNPLGISGNYDRLPFAPYFIFKDLVTIFIFFIVLSIFVFFMPNALGDSENYVMANPMQTPPAIVPEWYLLPFYAILRSI.

Residues 38-58 traverse the membrane as a helical segment; it reads FFALHFLLPFVLAALALMHLI. Heme b contacts are provided by His-42 and His-56. His-61 is a binding site for a ubiquinone. Residues 85–105 form a helical membrane-spanning segment; it reads FIFKDLVTIFIFFIVLSIFVF.

This sequence belongs to the cytochrome b family. Fungal cytochrome b-c1 complex contains 10 subunits; 3 respiratory subunits, 2 core proteins and 5 low-molecular weight proteins. Cytochrome b-c1 complex is a homodimer. It depends on heme b as a cofactor.

Its subcellular location is the mitochondrion inner membrane. Functionally, component of the ubiquinol-cytochrome c reductase complex (complex III or cytochrome b-c1 complex) that is part of the mitochondrial respiratory chain. The b-c1 complex mediates electron transfer from ubiquinol to cytochrome c. Contributes to the generation of a proton gradient across the mitochondrial membrane that is then used for ATP synthesis. The polypeptide is Cytochrome b (cob) (Aspergillus flavus).